A 331-amino-acid chain; its full sequence is Ornithine carbamoyltransferase (331 aa).

Carbamoyl phosphate contacts are provided by residues 55-58, Q82, R106, and 133-136; these read STRT and HPTQ. L-ornithine is bound by residues N166, D230, and 234-235; that span reads SM. Carbamoyl phosphate-binding positions include 272–273 and R317; that span reads CL.

This sequence belongs to the aspartate/ornithine carbamoyltransferase superfamily. OTCase family.

The protein resides in the cytoplasm. The catalysed reaction is carbamoyl phosphate + L-ornithine = L-citrulline + phosphate + H(+). Its pathway is amino-acid biosynthesis; L-arginine biosynthesis; L-arginine from L-ornithine and carbamoyl phosphate: step 1/3. Functionally, reversibly catalyzes the transfer of the carbamoyl group from carbamoyl phosphate (CP) to the N(epsilon) atom of ornithine (ORN) to produce L-citrulline. The protein is Ornithine carbamoyltransferase of Neisseria meningitidis serogroup C / serotype 2a (strain ATCC 700532 / DSM 15464 / FAM18).